A 298-amino-acid polypeptide reads, in one-letter code: MTPDPGAFNHISVLSHELMAGLMLQEQGLYLDATVGGGGHSALILSQYPQTQVIALDQDIQALEAARAKLHDACDRIQFWQGNFSTYHPGELRFDGIIADLGVSSAQLDRPERGFSFRYDADLDMRMDQSQGLTAADVINTYSERDLADIFYHYGEERFSRRIARKIVSKRPLRTTSDLARVVASSLPAAKGRRRRIHPATRVFQALRIAVNQELQVLEKFIEIAPTWLKPGGRIGIISFHSLEDRIVKIHFRQNSLLQVVTKKPIVASEQEKRENSRSRSAKLRFAERVPLADEAES.

S-adenosyl-L-methionine is bound by residues 38 to 40 (GGH), aspartate 57, phenylalanine 84, aspartate 100, and glutamine 107.

This sequence belongs to the methyltransferase superfamily. RsmH family.

It is found in the cytoplasm. It carries out the reaction cytidine(1402) in 16S rRNA + S-adenosyl-L-methionine = N(4)-methylcytidine(1402) in 16S rRNA + S-adenosyl-L-homocysteine + H(+). Functionally, specifically methylates the N4 position of cytidine in position 1402 (C1402) of 16S rRNA. The polypeptide is Ribosomal RNA small subunit methyltransferase H (Acaryochloris marina (strain MBIC 11017)).